A 112-amino-acid polypeptide reads, in one-letter code: Chaperone NapD (112 aa).

This sequence belongs to the NapD family. Interacts with the cytoplasmic NapA precursor.

It localises to the cytoplasm. Functionally, chaperone for NapA, the catalytic subunit of the periplasmic nitrate reductase. It binds directly and specifically to the twin-arginine signal peptide of NapA, preventing premature interaction with the Tat translocase and premature export. The polypeptide is Chaperone NapD (Paracoccus pantotrophus (Thiosphaera pantotropha)).